The sequence spans 253 residues: 3-deoxy-manno-octulosonate cytidylyltransferase (253 aa).

Belongs to the KdsB family.

Its subcellular location is the cytoplasm. It catalyses the reaction 3-deoxy-alpha-D-manno-oct-2-ulosonate + CTP = CMP-3-deoxy-beta-D-manno-octulosonate + diphosphate. It functions in the pathway nucleotide-sugar biosynthesis; CMP-3-deoxy-D-manno-octulosonate biosynthesis; CMP-3-deoxy-D-manno-octulosonate from 3-deoxy-D-manno-octulosonate and CTP: step 1/1. The protein operates within bacterial outer membrane biogenesis; lipopolysaccharide biosynthesis. Its function is as follows. Activates KDO (a required 8-carbon sugar) for incorporation into bacterial lipopolysaccharide in Gram-negative bacteria. The chain is 3-deoxy-manno-octulosonate cytidylyltransferase from Pseudoalteromonas translucida (strain TAC 125).